Consider the following 519-residue polypeptide: 2-isopropylmalate synthase (519 aa).

The region spanning 5–267 (VIIFDTTLRD…TTNVNPMEIS (263 aa)) is the Pyruvate carboxyltransferase domain. Asp14, His202, His204, and Asn238 together coordinate Mn(2+). The tract at residues 392–519 (RLESINVQSG…KEQLIHIDQV (128 aa)) is regulatory domain.

It belongs to the alpha-IPM synthase/homocitrate synthase family. LeuA type 1 subfamily. As to quaternary structure, homodimer. Requires Mn(2+) as cofactor.

The protein resides in the cytoplasm. The catalysed reaction is 3-methyl-2-oxobutanoate + acetyl-CoA + H2O = (2S)-2-isopropylmalate + CoA + H(+). The protein operates within amino-acid biosynthesis; L-leucine biosynthesis; L-leucine from 3-methyl-2-oxobutanoate: step 1/4. In terms of biological role, catalyzes the condensation of the acetyl group of acetyl-CoA with 3-methyl-2-oxobutanoate (2-ketoisovalerate) to form 3-carboxy-3-hydroxy-4-methylpentanoate (2-isopropylmalate). The polypeptide is 2-isopropylmalate synthase (Psychromonas ingrahamii (strain DSM 17664 / CCUG 51855 / 37)).